A 648-amino-acid polypeptide reads, in one-letter code: MESIVWLLLLSPALVAGSLHPRIDNGLAKTPQMGWNSYNYYSCSPNEAIVRSNAKALVDLGLADLGYRYVTTDCGWSVADRLPNGTLTWNETLFPSGFPAMGKYLHELGLLFGVYGDSGTKLCGSPPDQVGSLYHEEQDAKTFAEWGADSLKYDNCYSDAATNYPNVNYEPSTSPRPRYEIMSSALARVGRPILFQICEWGIDFPALWAPALGSSWRIGNDIIPEWRSIFRTLNQAVPNTDFAGPGQWADLDMLYVGNGVFSLPEEQTHFSLWAILKSPLTIGAALKDDDTSINQASLEVLKQKDVIGFNQDALGVSASLKRRWSDEGYEVWSGPLSGNRTVVAVINWRDESRDLTLDLPDVGLQYAQVARNIWGKTVVRDVRTSYTAGVAGHGTMLLELQGTIPSGLYPAKIFAKSTDQKTTFESIYAATTSANYELAITFSRPSTETVTITTSSGQTISISGKSGRIALTAGSNTITIQHKTPIESIQITPPTGTYYANTVFNVTGSAKHTTCGSGCSPVGSKIGDLSPNSNAYTSIPATTVGSKYLAIDYINNEVAFSSSWGWGSNSRNLTVSVNDGAPVRLEVPLSGRHSELFSPGKGWWDTATLGVLTSGWKKGENKVVFGNQGGEDGFQTYAADFVGVRILD.

Positions Met1–Gly17 are cleaved as a signal peptide. 2 N-linked (GlcNAc...) asparagine glycosylation sites follow: Asn84 and Asn90. Residues Cys123 and Cys156 are joined by a disulfide bond. Catalysis depends on Asp154, which acts as the Nucleophile. Glu199 to Asp203 serves as a coordination point for substrate. Asp221 (proton donor) is an active-site residue. Asn339, Asn505, and Asn572 each carry an N-linked (GlcNAc...) asparagine glycan.

The protein belongs to the glycosyl hydrolase 27 family.

The protein localises to the secreted. The catalysed reaction is Hydrolysis of terminal, non-reducing alpha-D-galactose residues in alpha-D-galactosides, including galactose oligosaccharides, galactomannans and galactolipids.. Its function is as follows. Hydrolyzes a variety of simple alpha-D-galactoside as well as more complex molecules such as oligosaccharides and polysaccharides. The sequence is that of Probable alpha-galactosidase D (aglD) from Neosartorya fischeri (strain ATCC 1020 / DSM 3700 / CBS 544.65 / FGSC A1164 / JCM 1740 / NRRL 181 / WB 181) (Aspergillus fischerianus).